Consider the following 894-residue polypeptide: DNA mismatch repair protein MutS (894 aa).

ATP is bound at residue G629–S636. The segment at T819–E840 is disordered.

The protein belongs to the DNA mismatch repair MutS family.

This protein is involved in the repair of mismatches in DNA. It is possible that it carries out the mismatch recognition step. This protein has a weak ATPase activity. This chain is DNA mismatch repair protein MutS, found in Cupriavidus pinatubonensis (strain JMP 134 / LMG 1197) (Cupriavidus necator (strain JMP 134)).